The chain runs to 118 residues: Holo-[acyl-carrier-protein] synthase (118 aa).

Aspartate 8 and glutamate 58 together coordinate Mg(2+).

This sequence belongs to the P-Pant transferase superfamily. AcpS family. It depends on Mg(2+) as a cofactor.

Its subcellular location is the cytoplasm. The enzyme catalyses apo-[ACP] + CoA = holo-[ACP] + adenosine 3',5'-bisphosphate + H(+). Functionally, transfers the 4'-phosphopantetheine moiety from coenzyme A to a Ser of acyl-carrier-protein. In Listeria welshimeri serovar 6b (strain ATCC 35897 / DSM 20650 / CCUG 15529 / CIP 8149 / NCTC 11857 / SLCC 5334 / V8), this protein is Holo-[acyl-carrier-protein] synthase.